Reading from the N-terminus, the 72-residue chain is SRY-related protein ADW4 (72 aa).

The HMG box DNA-binding region spans 1–69 (VKRPMNAFMV…KHMADYPNYK (69 aa)).

The protein localises to the nucleus. The polypeptide is SRY-related protein ADW4 (Alligator mississippiensis (American alligator)).